The sequence spans 294 residues: Release factor glutamine methyltransferase (294 aa).

Positions 148 and 201 each coordinate S-adenosyl-L-methionine. 201-204 serves as a coordination point for substrate; sequence NPPY.

Belongs to the protein N5-glutamine methyltransferase family. PrmC subfamily.

It catalyses the reaction L-glutaminyl-[peptide chain release factor] + S-adenosyl-L-methionine = N(5)-methyl-L-glutaminyl-[peptide chain release factor] + S-adenosyl-L-homocysteine + H(+). In terms of biological role, methylates the class 1 translation termination release factors RF1/PrfA and RF2/PrfB on the glutamine residue of the universally conserved GGQ motif. This chain is Release factor glutamine methyltransferase, found in Bifidobacterium longum (strain NCC 2705).